A 376-amino-acid polypeptide reads, in one-letter code: Enoyl-[acyl-carrier-protein] reductase, mitochondrial (376 aa).

Tyrosine 72 functions as the Proton donor in the catalytic mechanism. NADP(+) contacts are provided by residues asparagine 154, 182–185 (TSAV), 205–207 (RDR), 280–283 (YGGM), 305–307 (YWI), and lysine 369.

Belongs to the zinc-containing alcohol dehydrogenase family. Quinone oxidoreductase subfamily. In terms of assembly, homodimer.

It localises to the mitochondrion matrix. The catalysed reaction is a 2,3-saturated acyl-[ACP] + NADP(+) = a (2E)-enoyl-[ACP] + NADPH + H(+). In terms of biological role, catalyzes the NADPH-dependent reduction of trans-2-enoyl thioesters in mitochondrial fatty acid synthesis (fatty acid synthesis type II). Fatty acid chain elongation in mitochondria uses acyl carrier protein (ACP) as an acyl group carrier, but the enzyme accepts both ACP and CoA thioesters as substrates in vitro. Required for respiration and the maintenance of the mitochondrial compartment. The sequence is that of Enoyl-[acyl-carrier-protein] reductase, mitochondrial (ETR1) from Eremothecium gossypii (strain ATCC 10895 / CBS 109.51 / FGSC 9923 / NRRL Y-1056) (Yeast).